The following is a 179-amino-acid chain: UPF0227 protein Shew185_2404 (179 aa).

The protein belongs to the UPF0227 family.

The polypeptide is UPF0227 protein Shew185_2404 (Shewanella baltica (strain OS185)).